Consider the following 92-residue polypeptide: Bombyxin A-6 (92 aa).

The first 19 residues, 1–19 (MKILLAIALMLSTVMWVST), serve as a signal peptide directing secretion. Glutamine 20 carries the post-translational modification Pyrrolidone carboxylic acid. Intrachain disulfides connect cysteine 29–cysteine 79, cysteine 41–cysteine 92, and cysteine 78–cysteine 83. Positions 50–70 (SGAQFASYGSAWLMPYSEGRG) are cleaved as a propeptide — c peptide like.

It belongs to the insulin family. Heterodimer of a B chain and an A chain linked by two disulfide bonds.

Its subcellular location is the secreted. Functionally, brain peptide responsible for activation of prothoracic glands to produce ecdysone in insects. The chain is Bombyxin A-6 (BBXA6) from Bombyx mori (Silk moth).